Here is a 96-residue protein sequence, read N- to C-terminus: uncharacterized protein (96 aa).

This is an uncharacterized protein from Sulfolobus islandicus filamentous virus (isolate Iceland/Hveragerdi) (SIFV).